Reading from the N-terminus, the 467-residue chain is UDP-N-acetylmuramoylalanine--D-glutamate ligase (467 aa).

115–121 is an ATP binding site; that stretch reads GTDGKTT.

It belongs to the MurCDEF family.

It is found in the cytoplasm. The enzyme catalyses UDP-N-acetyl-alpha-D-muramoyl-L-alanine + D-glutamate + ATP = UDP-N-acetyl-alpha-D-muramoyl-L-alanyl-D-glutamate + ADP + phosphate + H(+). The protein operates within cell wall biogenesis; peptidoglycan biosynthesis. In terms of biological role, cell wall formation. Catalyzes the addition of glutamate to the nucleotide precursor UDP-N-acetylmuramoyl-L-alanine (UMA). The protein is UDP-N-acetylmuramoylalanine--D-glutamate ligase of Chlorobaculum parvum (strain DSM 263 / NCIMB 8327) (Chlorobium vibrioforme subsp. thiosulfatophilum).